The following is a 317-amino-acid chain: 4-hydroxy-3-methylbut-2-enyl diphosphate reductase (317 aa).

C12 provides a ligand contact to [4Fe-4S] cluster. Residues H41 and H74 each contribute to the (2E)-4-hydroxy-3-methylbut-2-enyl diphosphate site. Dimethylallyl diphosphate-binding residues include H41 and H74. Isopentenyl diphosphate is bound by residues H41 and H74. [4Fe-4S] cluster is bound at residue C96. H124 serves as a coordination point for (2E)-4-hydroxy-3-methylbut-2-enyl diphosphate. H124 is a binding site for dimethylallyl diphosphate. Residue H124 participates in isopentenyl diphosphate binding. The active-site Proton donor is the E126. (2E)-4-hydroxy-3-methylbut-2-enyl diphosphate is bound at residue T168. C198 lines the [4Fe-4S] cluster pocket. (2E)-4-hydroxy-3-methylbut-2-enyl diphosphate is bound by residues S226, S227, N228, and S270. 4 residues coordinate dimethylallyl diphosphate: S226, S227, N228, and S270. Positions 226, 227, 228, and 270 each coordinate isopentenyl diphosphate.

It belongs to the IspH family. [4Fe-4S] cluster serves as cofactor.

The catalysed reaction is isopentenyl diphosphate + 2 oxidized [2Fe-2S]-[ferredoxin] + H2O = (2E)-4-hydroxy-3-methylbut-2-enyl diphosphate + 2 reduced [2Fe-2S]-[ferredoxin] + 2 H(+). The enzyme catalyses dimethylallyl diphosphate + 2 oxidized [2Fe-2S]-[ferredoxin] + H2O = (2E)-4-hydroxy-3-methylbut-2-enyl diphosphate + 2 reduced [2Fe-2S]-[ferredoxin] + 2 H(+). Its pathway is isoprenoid biosynthesis; dimethylallyl diphosphate biosynthesis; dimethylallyl diphosphate from (2E)-4-hydroxy-3-methylbutenyl diphosphate: step 1/1. The protein operates within isoprenoid biosynthesis; isopentenyl diphosphate biosynthesis via DXP pathway; isopentenyl diphosphate from 1-deoxy-D-xylulose 5-phosphate: step 6/6. Its function is as follows. Catalyzes the conversion of 1-hydroxy-2-methyl-2-(E)-butenyl 4-diphosphate (HMBPP) into a mixture of isopentenyl diphosphate (IPP) and dimethylallyl diphosphate (DMAPP). Acts in the terminal step of the DOXP/MEP pathway for isoprenoid precursor biosynthesis. This chain is 4-hydroxy-3-methylbut-2-enyl diphosphate reductase, found in Hahella chejuensis (strain KCTC 2396).